The primary structure comprises 873 residues: Protein translocase subunit SecA (873 aa).

ATP contacts are provided by residues Gln88, 106-110 (GEGKT), and Asp501. Zn(2+) contacts are provided by Cys856, Cys858, Cys867, and His868.

This sequence belongs to the SecA family. In terms of assembly, monomer and homodimer. Part of the essential Sec protein translocation apparatus which comprises SecA, SecYEG and auxiliary proteins SecDF-YajC and YidC. It depends on Zn(2+) as a cofactor.

Its subcellular location is the cell inner membrane. The protein localises to the cytoplasm. The catalysed reaction is ATP + H2O + cellular proteinSide 1 = ADP + phosphate + cellular proteinSide 2.. Its function is as follows. Part of the Sec protein translocase complex. Interacts with the SecYEG preprotein conducting channel. Has a central role in coupling the hydrolysis of ATP to the transfer of proteins into and across the cell membrane, serving both as a receptor for the preprotein-SecB complex and as an ATP-driven molecular motor driving the stepwise translocation of polypeptide chains across the membrane. The polypeptide is Protein translocase subunit SecA (Anaplasma phagocytophilum (strain HZ)).